A 169-amino-acid polypeptide reads, in one-letter code: Lipoprotein signal peptidase (169 aa).

4 helical membrane passes run 10–30, 41–61, 68–88, and 94–114; these read LPWL…KAFF, VVIP…AFSF, WQRW…VVWL, and GETW…GNLY. Catalysis depends on residues Asp124 and Asp143. A helical transmembrane segment spans residues 135–155; it reads YFPAFNLADSAITVGAVMLAL.

It belongs to the peptidase A8 family.

The protein localises to the cell inner membrane. It catalyses the reaction Release of signal peptides from bacterial membrane prolipoproteins. Hydrolyzes -Xaa-Yaa-Zaa-|-(S,diacylglyceryl)Cys-, in which Xaa is hydrophobic (preferably Leu), and Yaa (Ala or Ser) and Zaa (Gly or Ala) have small, neutral side chains.. It functions in the pathway protein modification; lipoprotein biosynthesis (signal peptide cleavage). In terms of biological role, this protein specifically catalyzes the removal of signal peptides from prolipoproteins. This is Lipoprotein signal peptidase from Pseudomonas paraeruginosa (strain DSM 24068 / PA7) (Pseudomonas aeruginosa (strain PA7)).